The primary structure comprises 443 residues: FLYWCH-type zinc finger-containing protein peb-1 (443 aa).

Positions 22 to 49 (KPGSSDISSSSTDTSAISPISVSSMPLS) are disordered. Low complexity predominate over residues 25–42 (SSDISSSSTDTSAISPIS). Residues 46-203 (MPLSPDKEKK…RNKDGKPKKP (158 aa)) constitute a DNA-binding region (required for DNA-binding). Residues 69–135 (IVTSFKGYQK…NACTKGSHNH (67 aa)) form an FLYWCH-type zinc finger. Residues 251 to 271 (PTIQIPQPIPTPIQHQQQEQS) form a disordered region.

The protein resides in the nucleus. Functionally, putative transcription factor. Binds to specific sequence motif 5'-[TC][AGT]TGCC[GA][AT]-3' in regulatory elements of target genes such as myosin myo-2. May modulate gene expression, perhaps acting in opposition to transcription factor pha-4. Involved in morphogenesis, perhaps especially in formation of the pharynx. Plays roles in molting, feeding and morphology. This Caenorhabditis elegans protein is FLYWCH-type zinc finger-containing protein peb-1.